The primary structure comprises 298 residues: Protoheme IX farnesyltransferase (298 aa).

Helical transmembrane passes span 23-43 (VTQLAVFCAVIGMFLAVPGLP), 49-69 (LFGTIGIWLLAAAAFAINCLI), 95-115 (VLSLSGLLGGAGMLVLYHLVN), 117-137 (LTMWLTFATFVGYAVIYTVIL), 144-164 (NIVIGGLSGAMPPALGWASVA), 171-191 (AWVLVLIIFIWTPPHFWALAL), 234-254 (FMHMNGLLYLLAAVILGGIFV), and 276-296 (SILYLALLFGALLVDHWVGVL).

Belongs to the UbiA prenyltransferase family. Protoheme IX farnesyltransferase subfamily.

It is found in the cell inner membrane. The enzyme catalyses heme b + (2E,6E)-farnesyl diphosphate + H2O = Fe(II)-heme o + diphosphate. Its pathway is porphyrin-containing compound metabolism; heme O biosynthesis; heme O from protoheme: step 1/1. Functionally, converts heme B (protoheme IX) to heme O by substitution of the vinyl group on carbon 2 of heme B porphyrin ring with a hydroxyethyl farnesyl side group. This chain is Protoheme IX farnesyltransferase, found in Bordetella avium (strain 197N).